The primary structure comprises 191 residues: Orotate phosphoribosyltransferase (191 aa).

114–122 is a 5-phospho-alpha-D-ribose 1-diphosphate binding site; sequence EDVVTTGKS. Positions 118 and 146 each coordinate orotate.

It belongs to the purine/pyrimidine phosphoribosyltransferase family. PyrE subfamily. Homodimer. Mg(2+) is required as a cofactor.

The enzyme catalyses orotidine 5'-phosphate + diphosphate = orotate + 5-phospho-alpha-D-ribose 1-diphosphate. It participates in pyrimidine metabolism; UMP biosynthesis via de novo pathway; UMP from orotate: step 1/2. Catalyzes the transfer of a ribosyl phosphate group from 5-phosphoribose 1-diphosphate to orotate, leading to the formation of orotidine monophosphate (OMP). The protein is Orotate phosphoribosyltransferase of Clostridium botulinum (strain Kyoto / Type A2).